We begin with the raw amino-acid sequence, 222 residues long: MGQKINPNGFRLGVNRDWEAKWYADKNYADTLNEDLRIRKFISEKLADASVSTVEIERAANRINISIHTAKPGMVIGKGGKEVEALRKELSALTNKNVHINIVEIKKPDLDAKLVGEGIARQLEARIAFRRATRQATQRSMRSGAKGIKVQTAGRLNGADMARREWHTEGSVPLHTLRADIDYAWVEAATTYGQIGVKVWINRGEILPQRKNKPSKKAKGGN.

The KH type-2 domain maps to 38-106; the sequence is IRKFISEKLA…NVHINIVEIK (69 aa).

It belongs to the universal ribosomal protein uS3 family. Part of the 30S ribosomal subunit. Forms a tight complex with proteins S10 and S14.

In terms of biological role, binds the lower part of the 30S subunit head. Binds mRNA in the 70S ribosome, positioning it for translation. This is Small ribosomal subunit protein uS3 from Lactobacillus johnsonii (strain CNCM I-12250 / La1 / NCC 533).